Consider the following 355-residue polypeptide: Uroporphyrinogen decarboxylase (355 aa).

Residues 27–31 (RQAGR), Asp-77, Tyr-154, Thr-209, and His-327 each bind substrate.

Belongs to the uroporphyrinogen decarboxylase family. Homodimer.

Its subcellular location is the cytoplasm. It catalyses the reaction uroporphyrinogen III + 4 H(+) = coproporphyrinogen III + 4 CO2. Its pathway is porphyrin-containing compound metabolism; protoporphyrin-IX biosynthesis; coproporphyrinogen-III from 5-aminolevulinate: step 4/4. In terms of biological role, catalyzes the decarboxylation of four acetate groups of uroporphyrinogen-III to yield coproporphyrinogen-III. This Yersinia enterocolitica serotype O:8 / biotype 1B (strain NCTC 13174 / 8081) protein is Uroporphyrinogen decarboxylase.